We begin with the raw amino-acid sequence, 320 residues long: Cytochrome f (320 aa).

The first 35 residues, 1–35, serve as a signal peptide directing secretion; the sequence is MNFFTHKKNNFGSFVTIFSFLVALGVTNLTPAAEA. Heme-binding residues include Tyr36, Cys56, Cys59, and His60. The helical transmembrane segment at 286-306 threads the bilayer; it reads IQGLLVFFATVLFAQVLLVLK.

The protein belongs to the cytochrome f family. In terms of assembly, the 4 large subunits of the cytochrome b6-f complex are cytochrome b6, subunit IV (17 kDa polypeptide, petD), cytochrome f and the Rieske protein, while the 4 small subunits are PetG, PetL, PetM and PetN. The complex functions as a dimer. The cofactor is heme.

The protein resides in the plastid. The protein localises to the chloroplast thylakoid membrane. Functionally, component of the cytochrome b6-f complex, which mediates electron transfer between photosystem II (PSII) and photosystem I (PSI), cyclic electron flow around PSI, and state transitions. The protein is Cytochrome f of Tetradesmus obliquus (Green alga).